A 609-amino-acid polypeptide reads, in one-letter code: MSTGFNAQSFLRTVSSSAGVYRMYDVKGDVIYVGKAKDLKKRLSSYFRKNLGNVKTQALVSHIHHIDVTLTHSETDALLLENDYIKQYMPKYNVLLRDDKSYPYIFLSQHEHPRLAYHRGPQREKGYYFGPYPNGGAVRESLHLMQKLFPIRQCDDLYYKSRTRPCLQYQLSRCSAPCVGKVSNAEYDEQVKLASLFLKGKDKQVISELVAKMEEAAEQQAYEQAARFRDQIMALRRVAEQQEVSGNTGDMDVIGVHYASGIACFHLLFIREGKIFGSRSYYPTVPAQTDIEEVLRSFLLQFYLNADIQRTIPKEVVISHHFEELHELEAAVSEALNKKFSIKTNVRADRASFLRLALTNATNAVMTRLSHKNTVEQRFVLLEEILELNAPIQRMECFDISHTMGESTVASCVVFNREGPHKAEYRRYNIEGITPGDDYAAMKQAISRRFDKIDASGKIPDILFIDGGLGQLRIAQQIVDEKFVNLDKAPQLIGVAKGESRKPGLETLIFGDTESSFSLEDDSPALHLIQHIRDESHRFAITGHRNRRQKTRNTSTLESIPGIGPKRRKALLQHLGGLQEVKGASVAELAKVPGISIEMAQTIHDALRG.

The region spanning 16-94 (SSAGVYRMYD…IKQYMPKYNV (79 aa)) is the GIY-YIG domain. In terms of domain architecture, UVR spans 203-238 (KQVISELVAKMEEAAEQQAYEQAARFRDQIMALRRV).

This sequence belongs to the UvrC family. As to quaternary structure, interacts with UvrB in an incision complex.

It is found in the cytoplasm. Its function is as follows. The UvrABC repair system catalyzes the recognition and processing of DNA lesions. UvrC both incises the 5' and 3' sides of the lesion. The N-terminal half is responsible for the 3' incision and the C-terminal half is responsible for the 5' incision. This is UvrABC system protein C from Shewanella sp. (strain MR-4).